The following is a 111-amino-acid chain: Small ribosomal subunit protein bS16 (111 aa).

This sequence belongs to the bacterial ribosomal protein bS16 family.

The protein is Small ribosomal subunit protein bS16 of Rickettsia canadensis (strain McKiel).